The chain runs to 172 residues: Large ribosomal subunit protein uL10 (172 aa).

Belongs to the universal ribosomal protein uL10 family. In terms of assembly, part of the ribosomal stalk of the 50S ribosomal subunit. The N-terminus interacts with L11 and the large rRNA to form the base of the stalk. The C-terminus forms an elongated spine to which L12 dimers bind in a sequential fashion forming a multimeric L10(L12)X complex.

Its function is as follows. Forms part of the ribosomal stalk, playing a central role in the interaction of the ribosome with GTP-bound translation factors. The chain is Large ribosomal subunit protein uL10 from Chlorobium luteolum (strain DSM 273 / BCRC 81028 / 2530) (Pelodictyon luteolum).